The chain runs to 218 residues: Glutathione S-transferase U24 (218 aa).

Positions 3–82 constitute a GST N-terminal domain; it reads DEVILLDFWA…YIDETWPDNN (80 aa). Residues 13–14, 39–40, 53–54, and 66–67 each bind glutathione; these read SM, NK, KI, and ES. Positions 88-215 constitute a GST C-terminal domain; sequence DPYKRAHAKF…TFISERRKKL (128 aa). Threonine 148 carries the post-translational modification Phosphothreonine.

It belongs to the GST superfamily. Tau family.

The protein resides in the cytoplasm. Its subcellular location is the cytosol. The enzyme catalyses RX + glutathione = an S-substituted glutathione + a halide anion + H(+). May be involved in the conjugation of reduced glutathione to a wide number of exogenous and endogenous hydrophobic electrophiles and have a detoxification role against certain herbicides. This chain is Glutathione S-transferase U24 (GSTU24), found in Arabidopsis thaliana (Mouse-ear cress).